The chain runs to 1291 residues: Capping protein-inhibiting regulator of actin dynamics (1291 aa).

2 positions are modified to phosphoserine: Ser-7 and Ser-28. 6 disordered regions span residues 48 to 71 (KFGQ…SSEE), 84 to 137 (QQDI…AGTI), 159 to 221 (HKLA…HEEK), 234 to 253 (KCKR…EQRR), 267 to 663 (QELL…ASHA), and 701 to 1238 (LGLS…TSVT). A Phosphoserine modification is found at Ser-132. The segment covering 159-176 (HKLAVKPKNQRVSRKHRW) has biased composition (basic residues). Residues 184-199 (EPGSFESQSSLDQNGQ) are compositionally biased toward polar residues. Positions 201 to 221 (GEDKHIWHGEEPEPLESHEEK) are enriched in basic and acidic residues. Over residues 270-291 (LEEEEEGEEEEEVKEEGEEGEE) the composition is skewed to acidic residues. Basic and acidic residues-rich tracts occupy residues 302 to 318 (PPEE…RCTE), 326 to 461 (DPAR…EDAK), and 470 to 483 (EAKR…KETP). Residues 324–560 (ADDPARLEAE…DLDAHCGGVD (237 aa)) are required for interaction with actin-capping proteins. Thr-482 bears the Phosphothreonine mark. Phosphoserine occurs at positions 493 and 510. Composition is skewed to basic and acidic residues over residues 506–527 (ADQR…REDL) and 534–543 (EIAEEPRGEG). Over residues 580–593 (EGTPAPEENEATAA) the composition is skewed to low complexity. The segment covering 594–612 (DIDRKVEELRWQEVDERQT) has biased composition (basic and acidic residues). At Ser-636 the chain carries Phosphoserine. Position 639 is a phosphothreonine (Thr-639). Residues 749 to 778 (KNSEGDQRGDREPARAGDEPVPRARCDSRG) are compositionally biased toward basic and acidic residues. Ser-867 bears the Phosphoserine mark. Over residues 875–888 (TESTTTLDSETTSD) the composition is skewed to low complexity. Residues 969 to 983 (QERKPALSPRKDSAE) are compositionally biased toward basic and acidic residues. Thr-1033 carries the post-translational modification Phosphothreonine. Ser-1037 carries the phosphoserine modification. Basic and acidic residues predominate over residues 1056–1070 (GKLDSEPSETAKESS). Ser-1076 bears the Phosphoserine mark. Basic and acidic residues-rich tracts occupy residues 1081–1098 (EELK…EKKP), 1117–1141 (TGRK…EKVE), and 1157–1182 (GFRE…KLSK). 2 stretches are compositionally biased toward polar residues: residues 1183–1197 (ETVS…SRAS) and 1229–1238 (KSNTLPTSVT).

As to quaternary structure, directly interacts with actin-capping proteins CAPZA1, CAPZA2 and CAPZB; this interaction decreases the binding of capping proteins to actin. As to expression, expressed in the small intestine (at protein level).

The protein resides in the cytoplasm. It is found in the cytosol. Involved in epithelial cell integrity by acting on the dynamics of the actin cytoskeleton. Positively regulates the actin polymerization, by inhibiting the interaction of actin-capping proteins with actin. In Mus musculus (Mouse), this protein is Capping protein-inhibiting regulator of actin dynamics.